The sequence spans 263 residues: Endonuclease 8 (263 aa).

The active-site Schiff-base intermediate with DNA is the Pro2. The Proton donor role is filled by Glu3. The active-site Proton donor; for beta-elimination activity is the Lys53. DNA is bound by residues Gln70, Arg125, and Asn169. The FPG-type zinc finger occupies 229-263 (KVFHRDGEACERCGGIIEKTTLSSRPFYWCPHCQK). The Proton donor; for delta-elimination activity role is filled by Arg253.

The protein belongs to the FPG family. Requires Zn(2+) as cofactor.

It carries out the reaction 2'-deoxyribonucleotide-(2'-deoxyribose 5'-phosphate)-2'-deoxyribonucleotide-DNA = a 3'-end 2'-deoxyribonucleotide-(2,3-dehydro-2,3-deoxyribose 5'-phosphate)-DNA + a 5'-end 5'-phospho-2'-deoxyribonucleoside-DNA + H(+). Functionally, involved in base excision repair of DNA damaged by oxidation or by mutagenic agents. Acts as a DNA glycosylase that recognizes and removes damaged bases. Has a preference for oxidized pyrimidines, such as thymine glycol, 5,6-dihydrouracil and 5,6-dihydrothymine. Has AP (apurinic/apyrimidinic) lyase activity and introduces nicks in the DNA strand. Cleaves the DNA backbone by beta-delta elimination to generate a single-strand break at the site of the removed base with both 3'- and 5'-phosphates. This is Endonuclease 8 from Salmonella enteritidis PT4 (strain P125109).